Reading from the N-terminus, the 335-residue chain is Tetraacyldisaccharide 4'-kinase (335 aa).

Position 58–65 (58–65 (TAGGSGKT)) interacts with ATP.

This sequence belongs to the LpxK family.

It carries out the reaction a lipid A disaccharide + ATP = a lipid IVA + ADP + H(+). The protein operates within glycolipid biosynthesis; lipid IV(A) biosynthesis; lipid IV(A) from (3R)-3-hydroxytetradecanoyl-[acyl-carrier-protein] and UDP-N-acetyl-alpha-D-glucosamine: step 6/6. Transfers the gamma-phosphate of ATP to the 4'-position of a tetraacyldisaccharide 1-phosphate intermediate (termed DS-1-P) to form tetraacyldisaccharide 1,4'-bis-phosphate (lipid IVA). This Shewanella frigidimarina (strain NCIMB 400) protein is Tetraacyldisaccharide 4'-kinase.